A 34-amino-acid chain; its full sequence is uncharacterized protein (34 aa).

Residues 10–30 form a helical membrane-spanning segment; the sequence is LIITSSFFAIAAVLVLSVLLI.

Its subcellular location is the membrane. This is an uncharacterized protein from Escherichia coli O6:H1 (strain CFT073 / ATCC 700928 / UPEC).